A 1184-amino-acid polypeptide reads, in one-letter code: DNA-directed RNA polymerase subunit beta' (1184 aa).

Zn(2+) contacts are provided by Cys-60, Cys-62, Cys-75, and Cys-78. Mg(2+) contacts are provided by Asp-449, Asp-451, and Asp-453. Zn(2+) is bound by residues Cys-794, Cys-867, Cys-874, and Cys-877.

It belongs to the RNA polymerase beta' chain family. In terms of assembly, the RNAP catalytic core consists of 2 alpha, 1 beta, 1 beta' and 1 omega subunit. When a sigma factor is associated with the core the holoenzyme is formed, which can initiate transcription. The cofactor is Mg(2+). It depends on Zn(2+) as a cofactor.

The enzyme catalyses RNA(n) + a ribonucleoside 5'-triphosphate = RNA(n+1) + diphosphate. In terms of biological role, DNA-dependent RNA polymerase catalyzes the transcription of DNA into RNA using the four ribonucleoside triphosphates as substrates. This chain is DNA-directed RNA polymerase subunit beta', found in Thermoanaerobacter sp. (strain X514).